The sequence spans 392 residues: Formate-dependent phosphoribosylglycinamide formyltransferase (392 aa).

Residues 22 to 23 (EL) and E82 each bind N(1)-(5-phospho-beta-D-ribosyl)glycinamide. Residues R114, K155, 160–165 (SSGKGQ), 195–198 (EKII), and E203 each bind ATP. The ATP-grasp domain maps to 119 to 308 (VLVSKKLNIL…EFALHVRSFL (190 aa)). Mg(2+) contacts are provided by E267 and E279. N(1)-(5-phospho-beta-D-ribosyl)glycinamide-binding positions include D286, K355, and 362–363 (RR).

It belongs to the PurK/PurT family. In terms of assembly, homodimer.

The catalysed reaction is N(1)-(5-phospho-beta-D-ribosyl)glycinamide + formate + ATP = N(2)-formyl-N(1)-(5-phospho-beta-D-ribosyl)glycinamide + ADP + phosphate + H(+). It functions in the pathway purine metabolism; IMP biosynthesis via de novo pathway; N(2)-formyl-N(1)-(5-phospho-D-ribosyl)glycinamide from N(1)-(5-phospho-D-ribosyl)glycinamide (formate route): step 1/1. In terms of biological role, involved in the de novo purine biosynthesis. Catalyzes the transfer of formate to 5-phospho-ribosyl-glycinamide (GAR), producing 5-phospho-ribosyl-N-formylglycinamide (FGAR). Formate is provided by PurU via hydrolysis of 10-formyl-tetrahydrofolate. In Wigglesworthia glossinidia brevipalpis, this protein is Formate-dependent phosphoribosylglycinamide formyltransferase.